The primary structure comprises 769 residues: Endothelin-converting enzyme 1 (769 aa).

Over 1-67 (MRTVWSPLAA…WAARTSVEKR (67 aa)) the chain is Cytoplasmic. Phosphothreonine is present on Thr24. The helical; Signal-anchor for type II membrane protein transmembrane segment at 68-88 (LVVLVTLLAAGLVACLAALGI) threads the bilayer. Topologically, residues 89 to 769 (QYQTRTPPVC…MNPHHKCEVW (681 aa)) are extracellular. One can recognise a Peptidase M13 domain in the interval 97-769 (VCLTEACVSV…MNPHHKCEVW (673 aa)). Intrachain disulfides connect Cys98–Cys103, Cys121–Cys754, Cys129–Cys714, Cys184–Cys434, and Cys643–Cys766. 8 N-linked (GlcNAc...) asparagine glycosylation sites follow: Asn165, Asn186, Asn209, Asn269, Asn315, Asn361, Asn382, and Asn538. Position 606 (His606) interacts with Zn(2+). Glu607 is a catalytic residue. His610 contacts Zn(2+). Residues Asn631 and Asn650 are each glycosylated (N-linked (GlcNAc...) asparagine). Residue Glu666 coordinates Zn(2+). The active-site Proton donor is Asp670.

It belongs to the peptidase M13 family. Homodimer; disulfide-linked. Interacts with PPP1R16B. Interacts with TSPAN8; this interaction recruits the endothelin converting enzyme ECE1 to tetraspanin-enriched microdomains and positively modulates its enzymatic activity. It depends on Zn(2+) as a cofactor.

It is found in the cell membrane. It catalyses the reaction Hydrolysis of the 21-Trp-|-Val-22 bond in big endothelin to form endothelin 1.. Inhibited by phosphoramidon. Its function is as follows. Converts big endothelin-1 to endothelin-1. The polypeptide is Endothelin-converting enzyme 1 (Ece1) (Mus musculus (Mouse)).